The sequence spans 547 residues: Chaperonin GroEL (547 aa).

ATP-binding positions include 30–33 (TLGP), Lys51, 87–91 (DGTTT), Gly415, and Asp496.

It belongs to the chaperonin (HSP60) family. Forms a cylinder of 14 subunits composed of two heptameric rings stacked back-to-back. Interacts with the co-chaperonin GroES.

Its subcellular location is the cytoplasm. It catalyses the reaction ATP + H2O + a folded polypeptide = ADP + phosphate + an unfolded polypeptide.. Its function is as follows. Together with its co-chaperonin GroES, plays an essential role in assisting protein folding. The GroEL-GroES system forms a nano-cage that allows encapsulation of the non-native substrate proteins and provides a physical environment optimized to promote and accelerate protein folding. The chain is Chaperonin GroEL from Haemophilus ducreyi (strain 35000HP / ATCC 700724).